Reading from the N-terminus, the 108-residue chain is Trp operon repressor homolog (108 aa).

Residues 59–82 mediate DNA binding; sequence QRQISQLLGVGVATITRGSNELKS.

This sequence belongs to the TrpR family. As to quaternary structure, homodimer.

The protein resides in the cytoplasm. Functionally, this protein is an aporepressor. When complexed with L-tryptophan it binds the operator region of the trp operon and prevents the initiation of transcription. In Aliivibrio salmonicida (strain LFI1238) (Vibrio salmonicida (strain LFI1238)), this protein is Trp operon repressor homolog.